Here is a 355-residue protein sequence, read N- to C-terminus: Protein-glutamate methylesterase/protein-glutamine glutaminase (355 aa).

In terms of domain architecture, Response regulatory spans 4–121 (KVLIIDDSAL…ANGMHEYSEM (118 aa)). Aspartate 55 bears the 4-aspartylphosphate mark. Positions 156–348 (LISSEKLIII…GRVLQYLAAN (193 aa)) constitute a CheB-type methylesterase domain. Residues serine 168, histidine 194, and aspartate 290 contribute to the active site.

This sequence belongs to the CheB family. Post-translationally, phosphorylated by CheA. Phosphorylation of the N-terminal regulatory domain activates the methylesterase activity.

The protein resides in the cytoplasm. It carries out the reaction [protein]-L-glutamate 5-O-methyl ester + H2O = L-glutamyl-[protein] + methanol + H(+). It catalyses the reaction L-glutaminyl-[protein] + H2O = L-glutamyl-[protein] + NH4(+). Involved in chemotaxis. Part of a chemotaxis signal transduction system that modulates chemotaxis in response to various stimuli. Catalyzes the demethylation of specific methylglutamate residues introduced into the chemoreceptors (methyl-accepting chemotaxis proteins or MCP) by CheR. Also mediates the irreversible deamidation of specific glutamine residues to glutamic acid. The chain is Protein-glutamate methylesterase/protein-glutamine glutaminase from Methylobacillus flagellatus (strain ATCC 51484 / DSM 6875 / VKM B-1610 / KT).